A 379-amino-acid chain; its full sequence is UDP-4-amino-4-deoxy-L-arabinose--oxoglutarate aminotransferase (379 aa).

An N6-(pyridoxal phosphate)lysine modification is found at lysine 182.

It belongs to the DegT/DnrJ/EryC1 family. ArnB subfamily. In terms of assembly, homodimer. The cofactor is pyridoxal 5'-phosphate.

The enzyme catalyses UDP-4-amino-4-deoxy-beta-L-arabinose + 2-oxoglutarate = UDP-beta-L-threo-pentopyranos-4-ulose + L-glutamate. It participates in nucleotide-sugar biosynthesis; UDP-4-deoxy-4-formamido-beta-L-arabinose biosynthesis; UDP-4-deoxy-4-formamido-beta-L-arabinose from UDP-alpha-D-glucuronate: step 2/3. The protein operates within bacterial outer membrane biogenesis; lipopolysaccharide biosynthesis. Its function is as follows. Catalyzes the conversion of UDP-4-keto-arabinose (UDP-Ara4O) to UDP-4-amino-4-deoxy-L-arabinose (UDP-L-Ara4N). The modified arabinose is attached to lipid A and is required for resistance to polymyxin and cationic antimicrobial peptides. This is UDP-4-amino-4-deoxy-L-arabinose--oxoglutarate aminotransferase from Klebsiella pneumoniae subsp. pneumoniae (strain ATCC 700721 / MGH 78578).